The chain runs to 122 residues: Basic phospholipase A2 PL-X (122 aa).

7 disulfide bridges follow: C26/C115, C28/C44, C43/C95, C49/C122, C50/C88, C57/C81, and C75/C86. Y27, G29, and G31 together coordinate Ca(2+). H47 is a catalytic residue. Residue D48 participates in Ca(2+) binding. D89 is a catalytic residue.

This sequence belongs to the phospholipase A2 family. Group II subfamily. D49 sub-subfamily. It depends on Ca(2+) as a cofactor. As to expression, expressed by the venom gland.

Its subcellular location is the secreted. It carries out the reaction a 1,2-diacyl-sn-glycero-3-phosphocholine + H2O = a 1-acyl-sn-glycero-3-phosphocholine + a fatty acid + H(+). In terms of biological role, PLA2 catalyzes the calcium-dependent hydrolysis of the 2-acyl groups in 3-sn-phosphoglycerides. The sequence is that of Basic phospholipase A2 PL-X from Protobothrops flavoviridis (Habu).